The following is a 498-amino-acid chain: Glutamyl-tRNA(Gln) amidotransferase subunit A (498 aa).

Catalysis depends on charge relay system residues K80 and S155. The segment at 132–159 (SSTENSAYGPTRNPWDTDRVPGGSSGGS) is disordered. The active-site Acyl-ester intermediate is the S179.

Belongs to the amidase family. GatA subfamily. As to quaternary structure, heterotrimer of A, B and C subunits.

The catalysed reaction is L-glutamyl-tRNA(Gln) + L-glutamine + ATP + H2O = L-glutaminyl-tRNA(Gln) + L-glutamate + ADP + phosphate + H(+). Functionally, allows the formation of correctly charged Gln-tRNA(Gln) through the transamidation of misacylated Glu-tRNA(Gln) in organisms which lack glutaminyl-tRNA synthetase. The reaction takes place in the presence of glutamine and ATP through an activated gamma-phospho-Glu-tRNA(Gln). This chain is Glutamyl-tRNA(Gln) amidotransferase subunit A, found in Thermobifida fusca (strain YX).